A 211-amino-acid chain; its full sequence is Dual specificity phosphatase 29 (211 aa).

The 146-residue stretch at 47-192 (HVNEVWPGIY…LRTLDIQLAI (146 aa)) folds into the Tyrosine-protein phosphatase domain. 136–143 (HCAMGRSR) lines the substrate pocket. Cys-137 (phosphocysteine intermediate) is an active-site residue.

It belongs to the protein-tyrosine phosphatase family. Non-receptor class dual specificity subfamily.

Its subcellular location is the cytoplasm. The protein localises to the nucleus. It catalyses the reaction O-phospho-L-tyrosyl-[protein] + H2O = L-tyrosyl-[protein] + phosphate. The enzyme catalyses O-phospho-L-seryl-[protein] + H2O = L-seryl-[protein] + phosphate. It carries out the reaction O-phospho-L-threonyl-[protein] + H2O = L-threonyl-[protein] + phosphate. Its function is as follows. Dual specificity phosphatase able to dephosphorylate phosphotyrosine, phosphoserine and phosphothreonine residues within the same substrate, with a preference for phosphotyrosine as a substrate. Involved in the modulation of AMPK and MAPK1/2 signaling pathways. The chain is Dual specificity phosphatase 29 (dusp29) from Callorhinchus milii (Ghost shark).